Consider the following 367-residue polypeptide: Coiled-coil domain-containing protein 34 (367 aa).

Position 55 is a phosphoserine (S55). 3 disordered regions span residues 77–105 (FPFG…KVES), 191–228 (QKKN…KAKE), and 310–349 (YNPI…SSLA). Residues 82–97 (DDSEGEDEEALDEDAR) are compositionally biased toward acidic residues. Coiled coils occupy residues 87–108 (EDEE…SLEG) and 153–280 (RLQQ…AKNK). A compositionally biased stretch (basic and acidic residues) spans 197 to 228 (ERKEREQKINKEMEEKEAKKREKEHLQEKAKE). The span at 339–349 (ASQPLPSSSLA) shows a compositional bias: low complexity.

As to expression, expressed in testis and sperm.

It is found in the cell projection. It localises to the cilium. Its subcellular location is the flagellum. Its function is as follows. Involved in spermatogenesis. Has a probable role in anterograde intraflagellar transport which is essential for the formation of sperm flagella. This chain is Coiled-coil domain-containing protein 34 (Ccdc34), found in Mus musculus (Mouse).